A 955-amino-acid polypeptide reads, in one-letter code: Reversion-inducing cysteine-rich protein with Kazal motifs (955 aa).

Positions 1-22 (MSGCLQILTVLLCCRFWALVFS) are cleaved as a signal peptide. One copy of the Knot 1 repeat lies at 28 to 75 (CVHHAADIPRCRDACEQLASIRSESRLRHLLHRLPSYCPETLSELWIC). The segment at 28 to 326 (CVHHAADIPR…NPVEMDLITC (299 aa)) is 5 X Knot repeats. Asn77 is a glycosylation site (N-linked (GlcNAc...) asparagine). Knot repeat units follow at residues 95 to 132 (CCEL…LYSC) and 142 to 188 (CCSY…LILC). Asn191 carries an N-linked (GlcNAc...) asparagine glycan. Knot repeat units follow at residues 207-254 (CCDR…LWQC) and 282-326 (CCFK…LITC). Asn287 and Asn375 each carry an N-linked (GlcNAc...) asparagine glycan. Kazal-like domains follow at residues 615 to 661 (LFTG…SCRS), 686 to 741 (DLSE…HCQD), and 742 to 778 (ACRR…RCHA). 5 disulfide bridges follow: Cys621–Cys646, Cys623–Cys642, Cys631–Cys659, Cys704–Cys724, and Cys713–Cys739. Residue Ser931 is the site of GPI-anchor amidated serine attachment. Residues 932 to 955 (SCVSISVCVLLLLCSLILTLTSDL) constitute a propeptide that is removed on maturation.

This sequence belongs to the RECK family. In terms of assembly, interacts (via knot repeats) with wnt7a (via disordered linker region); the interaction is direct. Interacts (via knot repeats) with wnt7b (via disordered linker region); the interaction is direct. Interacts with adgra2; the interaction is direct. In terms of tissue distribution, expressed in the cerebral endothelium.

The protein resides in the cell membrane. In terms of biological role, functions together with adgra2 to enable brain endothelial cells to selectively respond to Wnt7 signals (wnt7a or wnt7b). Plays a key role in Wnt7-specific responses: required for central nervous system (CNS) angiogenesis and blood-brain barrier regulation. Acts as a Wnt7-specific coactivator of canonical Wnt signaling by decoding Wnt ligands: acts by interacting specifically with the disordered linker region of Wnt7, thereby conferring ligand selectivity for Wnt7. Adgra2 is then required to deliver reck-bound Wnt7 to frizzled by assembling a higher-order RECK-ADGRA2-Fzd-LRP5-LRP6 complex. Also acts as a serine protease inhibitor. The chain is Reversion-inducing cysteine-rich protein with Kazal motifs from Danio rerio (Zebrafish).